A 199-amino-acid polypeptide reads, in one-letter code: MSGAELIIQEINREAERKIEYILNEAREEAEKIKEEAKRRAESKAEWILRRAKTQAELEKQRIIANARLEVRRKRLAVQEEIIRNVLDEVRKRLQEMPEEEYFESIKALLKEAVEELKEGKVRVYSNERTLALISSRIEEIRDYLGSISIEIGSAISTMGGVIVETEDGRIRIDNTFEARMERFEGEIRAKIAKVLFGG.

Belongs to the V-ATPase E subunit family. As to quaternary structure, has multiple subunits with at least A(3), B(3), C, D, E, F, H, I and proteolipid K(x).

The protein resides in the cell membrane. Its function is as follows. Component of the A-type ATP synthase that produces ATP from ADP in the presence of a proton gradient across the membrane. This chain is A-type ATP synthase subunit E, found in Pyrococcus abyssi (strain GE5 / Orsay).